The sequence spans 522 residues: F-box only protein 7 (522 aa).

The segment at 1–88 is ubiquitin-like; the sequence is MRLRVRLLKR…QDDIPAPNIP (88 aa). Residues 85–144 form a disordered region; sequence PNIPSSTDSEHSSLQNNEQPSLATSSNQTSMQDEQPSDSFQGQAAQSGVWNDDSMLGPSQ. A compositionally biased stretch (polar residues) spans 87–133; sequence IPSSTDSEHSSLQNNEQPSLATSSNQTSMQDEQPSDSFQGQAAQSGV. Positions 92–129 are important for interaction with PINK1; sequence DSEHSSLQNNEQPSLATSSNQTSMQDEQPSDSFQGQAA. Residues 129–169 form an important for interaction with CDK6 region; sequence AQSGVWNDDSMLGPSQNFEAESIQDNAHMAEGTGFYPSEPM. The tract at residues 180-324 is important for dimerization and interaction with PSMF1; sequence PHSLETLYQS…PLLAFTRQAL (145 aa). The region spanning 329–375 is the F-box domain; the sequence is VFGLVVLPLELKLRIFRLLDVRSVLSLSAVCRDLFTASNDPLLWRFL. The important for interaction with CDK6 stretch occupies residues 381-522; sequence RDNTVRVQDT…RPTDGRLSFM (142 aa). An omega-N-methylarginine mark is found at Arg-432 and Arg-451. The RFDP motif motif lies at 481–484; that stretch reads RFDP. A disordered region spans residues 483-522; that stretch reads DPVGPLPGPNPILPGRGGPNDRFPFRPSRGRPTDGRLSFM. Residue Arg-518 is modified to Asymmetric dimethylarginine.

In terms of assembly, part of the SCF (SKP1-CUL1-F-box) E3 ubiquitin-protein ligase complex SCF(FBXO7) formed of CUL1, SKP1, RBX1 and FBXO7. Interacts via its C-terminal proline-rich region with DLGAP5. Interacts with BIRC2. Interacts with CDK6 and promotes its interaction with D-type cyclin. Interacts with PSMF1. Interacts (via the N-terminal Ubl domain) with PRKN. Interact (via N-terminal region) with PINK1. As to quaternary structure, interact (via N-terminal region) with PINK1.

It localises to the cytoplasm. It is found in the nucleus. Its subcellular location is the mitochondrion. The protein localises to the cytosol. It participates in protein modification; protein ubiquitination. Its function is as follows. Substrate recognition component of a SCF (SKP1-CUL1-F-box protein) E3 ubiquitin-protein ligase complex which mediates the ubiquitination and subsequent proteasomal degradation of target proteins and plays a role in several biological processes such as cell cycle, cell proliferation, or maintenance of chromosome stability. Recognizes and ubiquitinates BIRC2 and the cell cycle regulator DLGAP5. Plays a role downstream of PINK1 in the clearance of damaged mitochondria via selective autophagy (mitophagy) by targeting PRKN to dysfunctional depolarized mitochondria. Promotes MFN1 ubiquitination. Mediates the ubiquitination and proteasomal degradation of UXT isoform 2, thereby impairing the NF-kappa-B signaling pathway. Inhibits NF-kappa-B pathway also by promoting the ubiquitination of TRAF2. Affects the assembly state and activity of the proteasome in the cells including neurons by ubiquitinating the proteasomal subunit PSMA2 via 'Lys-63'-linked polyubiquitin chains. Promotes 'Lys-48'-linked polyubiquitination SIRT7, leading to the hydrogen peroxide-induced cell death. The chain is F-box only protein 7 (FBXO7) from Homo sapiens (Human).